The chain runs to 430 residues: Transcription factor E2F1 (430 aa).

Residues 62–103 (ATPQAPRPAPSAPRPALGRPPVKRRLDLETDHQYLAGSSGPF) form a cyclin A:CDK2 binding region. Residues 84–186 (KRRLDLETDH…KKSKNHIQWL (103 aa)) form an interaction with BIRC2/c-IAP1 region. The segment at 95–123 (YLAGSSGPFRGRGRHPGKGVKSPGEKSRY) is disordered. The DNA-binding element occupies 105–189 (GRGRHPGKGV…KNHIQWLGSH (85 aa)). Residues Lys-112, Lys-115, and Lys-120 each carry the N6-acetyllysine modification. Positions 148–169 (LNWAAEVLKVQKRRIYDITNVL) are leucine-zipper. The DEF box motif lies at 153 to 189 (EVLKVQKRRIYDITNVLEGIQLIAKKSKNHIQWLGSH). Lys-180 is modified (N6-methyllysine; by SETD7). A required for interaction with TRIM28 region spans residues 187–375 (GSHTMVGIGK…QLSPLVAADS (189 aa)). The tract at residues 190–279 (TMVGIGKRLE…AVDSSETFQI (90 aa)) is dimerization. The tract at residues 294–340 (PEESADGISPGKTSCQETSSGEDRTADSGPAGPPPSPPSTSPALDPS) is disordered. A compositionally biased stretch (pro residues) spans 324-333 (AGPPPSPPST). The segment at 361–430 (PMEEDQLSPL…DFGDLTPLDF (70 aa)) is transactivation. A phosphoserine mark is found at Ser-368 and Ser-396. Residues 402–419 (LDYHFGLEEGEGIRDLFD) are RB1 binding. At Thr-426 the chain carries Phosphothreonine.

The protein belongs to the E2F/DP family. As to quaternary structure, component of the DRTF1/E2F transcription factor complex. Forms heterodimers with DP family members. The E2F1 complex binds specifically hypophosphorylated RB1, the interaction represses E2F1-driven transcription. During the cell cycle, RB1 becomes phosphorylated in mid-to-late G1 phase, detaches from the DRTF1/E2F complex, rendering E2F transcriptionally active. Interacts with TRRAP, which probably mediates its interaction with histone acetyltransferase complexes, leading to transcription activation. Binds TOPBP1 and EAPP. Interacts with ARID3A. Interacts with TRIM28; the interaction inhibits E2F1 acetylation through recruiting HDAC1 and represses its transcriptional activity. Interaction with KAT2B; the interaction acetylates E2F1 enhancing its DNA-binding and transcriptional activity. Interacts with BIRC2/c-IAP1 (via BIR domains). The complex TFDP1:E2F1 interacts with CEBPA; the interaction prevents CEBPA binding to target genes promoters and represses its transcriptional activity. Interacts with RRP1B. Interacts with HCFC1. Interacts with KMT2E; the interaction is probably indirect and is mediated via HCFC1. Interacts with DCAF5 and L3MBTL3; the interaction requires methylation at Lys-180 and is necessary to target E2F1 for ubiquitination by the CRL4-DCAF5 E3 ubiquitin ligase complex. Post-translationally, phosphorylated by CDK2 and cyclin A-CDK2 in the S-phase. Phosphorylation by CHEK2 stabilizes E2F1 upon DNA damage and regulates its effect on transcription and apoptosis. Phosphorylation at Ser-396 by GSK3B promotes interaction with USP11, leading to its deubiquitination and stabilization. Ubiquitinated via 'Lys-63'-linked ubiquitin, leading to its degradation. Deubiquitinated by USP11 following phosphorylation by GSK3B, promoting its stability. In terms of processing, acetylation stimulates DNA-binding. Enhanced under stress conditions such as DNA damage and inhibited by retinoblastoma protein RB1. Regulated by KAP1/TRIM28 which recruits HDAC1 to E2F1 resulting in deacetylation. Acetylated by P/CAF/KAT2B. Post-translationally, methylation at Lys-180 by SETD7 promotes E2F1 ubiquitin-dependent proteasomal degradation.

It localises to the nucleus. With respect to regulation, BIRC2/c-IAP1 stimulates its transcriptional activity. Transcription activator that binds DNA cooperatively with DP proteins through the E2 recognition site, 5'-TTTC[CG]CGC-3' found in the promoter region of a number of genes whose products are involved in cell cycle regulation or in DNA replication. The DRTF1/E2F complex functions in the control of cell-cycle progression from G1 to S phase. E2F1 binds preferentially RB1 in a cell-cycle dependent manner. It can mediate both cell proliferation and TP53/p53-dependent apoptosis. Blocks adipocyte differentiation by binding to specific promoters repressing CEBPA binding to its target gene promoters. Directly activates transcription of PEG10. Positively regulates transcription of RRP1B. This Mus musculus (Mouse) protein is Transcription factor E2F1.